The primary structure comprises 140 residues: Ribosome-binding factor A (140 aa).

The span at 118 to 133 (DEAKQQKHNGKDKTDT) shows a compositional bias: basic and acidic residues. The interval 118–140 (DEAKQQKHNGKDKTDTADSEGEE) is disordered.

This sequence belongs to the RbfA family. As to quaternary structure, monomer. Binds 30S ribosomal subunits, but not 50S ribosomal subunits or 70S ribosomes.

The protein localises to the cytoplasm. Functionally, one of several proteins that assist in the late maturation steps of the functional core of the 30S ribosomal subunit. Associates with free 30S ribosomal subunits (but not with 30S subunits that are part of 70S ribosomes or polysomes). Required for efficient processing of 16S rRNA. May interact with the 5'-terminal helix region of 16S rRNA. The chain is Ribosome-binding factor A from Shewanella woodyi (strain ATCC 51908 / MS32).